The following is a 367-amino-acid chain: Porin Omp2a (367 aa).

A signal peptide spans 1 to 22 (MNIKSLLLGSAAALVAASGAQA).

This sequence belongs to the alphaproteobacteria porin family. In terms of assembly, monomer.

It localises to the cell outer membrane. Functionally, forms passive diffusion pores that allow small molecular weight hydrophilic materials across the outer membrane. This chain is Porin Omp2a (omp2a), found in Brucella canis (strain ATCC 23365 / NCTC 10854 / RM-666).